The primary structure comprises 748 residues: E3 ubiquitin-protein ligase SMURF2 (748 aa).

The C2 domain maps to 1–119; it reads MSNPGGRRNG…TGYQRLDLCK (119 aa). Lys119 is covalently cross-linked (Glycyl lysine isopeptide (Lys-Gly) (interchain with G-Cter in ubiquitin)). 3 consecutive WW domains span residues 157-190, 251-284, and 297-330; these read NDLP…RPTR, PDLP…DPRV, and GPLP…DPRL. The HECT domain occupies 414–748; the sequence is RPKDLWKRLM…IEETCGFAVE (335 aa). Cys716 (glycyl thioester intermediate) is an active-site residue.

Interacts (via WW domains) with SMAD1. Interacts (via WW domains) with SMAD2 (via PY-motif). Interacts (via WW domains) with SMAD3 (via PY-motif). Interacts with SMAD6. Interacts with SMAD7 (via PY-motif) and TGFBR1; SMAD7 recruits SMURF2 to the TGF-beta receptor and regulates its degradation. Does not interact with SMAD4; SMAD4 lacks a PY-motif. Interacts with AIMP1. Interacts with SNON. Interacts with STAMBP and RNF11. May interact with NDFIP1 and NDFIP2; this interaction induces the E3 ubiquitin-protein ligase activity. Interacts with TTC3. In terms of assembly, (Microbial infection) Interacts (via WW domains) with EBOV and MARV VP40 (via PPXY motif); the interaction facilitates VP40 virus-like particle budding. Post-translationally, auto-ubiquitinated and ubiquitinated in the presence of RNF11 and UBE2D1. Ubiquitinated by the SCF(FBXL15) complex and TTC3, leading to its degradation by the proteasome. 'Lys-48'-linked polyubiquitination mediated by TRAF4 at Lys-119 leads to SMURF2 proteasomal degradation. As to expression, widely expressed.

It localises to the nucleus. Its subcellular location is the cytoplasm. It is found in the cell membrane. The protein resides in the membrane raft. It catalyses the reaction S-ubiquitinyl-[E2 ubiquitin-conjugating enzyme]-L-cysteine + [acceptor protein]-L-lysine = [E2 ubiquitin-conjugating enzyme]-L-cysteine + N(6)-ubiquitinyl-[acceptor protein]-L-lysine.. The protein operates within protein modification; protein ubiquitination. Its activity is regulated as follows. Activated by NDFIP1- and NDFIP2-binding. In terms of biological role, E3 ubiquitin-protein ligase which accepts ubiquitin from an E2 ubiquitin-conjugating enzyme in the form of a thioester and then directly transfers the ubiquitin to targeted substrates. Interacts with SMAD7 to trigger SMAD7-mediated transforming growth factor beta/TGF-beta receptor ubiquitin-dependent degradation, thereby down-regulating TGF-beta signaling. In addition, interaction with SMAD7 activates autocatalytic degradation, which is prevented by interaction with AIMP1. Also forms a stable complex with TGF-beta receptor-mediated phosphorylated SMAD1, SMAD2 and SMAD3, and targets SMAD1 and SMAD2 for ubiquitination and proteasome-mediated degradation. SMAD2 may recruit substrates, such as SNON, for ubiquitin-dependent degradation. Negatively regulates TGFB1-induced epithelial-mesenchymal transition and myofibroblast differentiation. Its function is as follows. (Microbial infection) In case of filoviruses Ebola/EBOV and Marburg/MARV infection, the complex formed by viral matrix protein VP40 and SMURF2 facilitates virus budding. This Homo sapiens (Human) protein is E3 ubiquitin-protein ligase SMURF2.